A 116-amino-acid polypeptide reads, in one-letter code: Large ribosomal subunit protein bL17 (116 aa).

This sequence belongs to the bacterial ribosomal protein bL17 family. In terms of assembly, part of the 50S ribosomal subunit. Contacts protein L32.

This is Large ribosomal subunit protein bL17 from Dictyoglomus thermophilum (strain ATCC 35947 / DSM 3960 / H-6-12).